The sequence spans 446 residues: Phosphoglucosamine mutase (446 aa).

The active-site Phosphoserine intermediate is the Ser103. 4 residues coordinate Mg(2+): Ser103, Asp242, Asp244, and Asp246. Residue Ser103 is modified to Phosphoserine.

Belongs to the phosphohexose mutase family. The cofactor is Mg(2+). Activated by phosphorylation.

The catalysed reaction is alpha-D-glucosamine 1-phosphate = D-glucosamine 6-phosphate. Its function is as follows. Catalyzes the conversion of glucosamine-6-phosphate to glucosamine-1-phosphate. The sequence is that of Phosphoglucosamine mutase from Vibrio vulnificus (strain CMCP6).